Reading from the N-terminus, the 338-residue chain is Lipoate-protein ligase A (338 aa).

Positions Pro29–Val216 constitute a BPL/LPL catalytic domain. ATP contacts are provided by residues Arg71, Gly76–Phe79, and Lys134. Lys134 is a (R)-lipoate binding site.

The protein belongs to the LplA family. As to quaternary structure, monomer.

The protein localises to the cytoplasm. It catalyses the reaction L-lysyl-[lipoyl-carrier protein] + (R)-lipoate + ATP = N(6)-[(R)-lipoyl]-L-lysyl-[lipoyl-carrier protein] + AMP + diphosphate + H(+). The protein operates within protein modification; protein lipoylation via exogenous pathway; protein N(6)-(lipoyl)lysine from lipoate: step 1/2. It participates in protein modification; protein lipoylation via exogenous pathway; protein N(6)-(lipoyl)lysine from lipoate: step 2/2. In terms of biological role, catalyzes both the ATP-dependent activation of exogenously supplied lipoate to lipoyl-AMP and the transfer of the activated lipoyl onto the lipoyl domains of lipoate-dependent enzymes. In Shigella boydii serotype 18 (strain CDC 3083-94 / BS512), this protein is Lipoate-protein ligase A.